Reading from the N-terminus, the 110-residue chain is MNITPIHDNVLVSLVESNKEEVSKKGIITSLASNDKSDANANKGIVIALGAGPAYGKTEKPKYAFGVGDIIYFKEYSGISFENEGNKYKIIGFEDVLAFEKPESGKQRKR.

Belongs to the GroES chaperonin family. As to quaternary structure, heptamer of 7 subunits arranged in a ring. Interacts with the chaperonin GroEL.

It localises to the cytoplasm. Together with the chaperonin GroEL, plays an essential role in assisting protein folding. The GroEL-GroES system forms a nano-cage that allows encapsulation of the non-native substrate proteins and provides a physical environment optimized to promote and accelerate protein folding. GroES binds to the apical surface of the GroEL ring, thereby capping the opening of the GroEL channel. The sequence is that of Co-chaperonin GroES from Mycoplasma genitalium (strain ATCC 33530 / DSM 19775 / NCTC 10195 / G37) (Mycoplasmoides genitalium).